A 446-amino-acid chain; its full sequence is Neuropeptide Y receptor type 5 (446 aa).

Topologically, residues 1-42 (MGSEIPDYYNKTLASENNTVATRNSGFPVWEDYKGSVDDLQY) are extracellular. 2 N-linked (GlcNAc...) asparagine glycosylation sites follow: asparagine 10 and asparagine 17. Residues 43 to 63 (FLIGLYTFVSLLGFMGNLLIL) form a helical membrane-spanning segment. Residues 64–77 (MAVMRKRNQKTTVN) lie on the Cytoplasmic side of the membrane. A helical transmembrane segment spans residues 78–98 (FLIGNLAFSDILVVLFCSPFT). Over 99–117 (LTSVLLDQWMFGKVMCHIM) the chain is Extracellular. Cysteine 114 and cysteine 198 are oxidised to a cystine. The chain crosses the membrane as a helical span at residues 118–138 (PFLQCVTVLVSTLILISIAIV). The Cytoplasmic portion of the chain corresponds to 139–156 (RYHMIKHPVSNNLTANHG). A helical transmembrane segment spans residues 157-177 (YFLIATVWTLGLAICSPLPVF). Residues 178–208 (HSLVELQESFGSAWLSSRYLCVESWPSDSYR) are Extracellular-facing. Residues 209–229 (IAFTISLLLVQYILPLVCLTV) traverse the membrane as a helical segment. Residues 230–369 (SHTSVCRTIS…RKRSRSVFYR (140 aa)) lie on the Cytoplasmic side of the membrane. The tract at residues 297–325 (RPAPAGPALESREGRPPGKVGSMQSQPPP) is disordered. Residues 370 to 390 (LTVLILVFAVSWMPLHLFHVV) form a helical membrane-spanning segment. Topologically, residues 391–407 (TDFNDNLISNRHFKLVY) are extracellular. A helical membrane pass occupies residues 408 to 428 (CICHLLGMMSCCLNPILYGFL). The Cytoplasmic segment spans residues 429–446 (NNGIKADLMSLIHCLHVS). Cysteine 442 is lipidated: S-palmitoyl cysteine.

It belongs to the G-protein coupled receptor 1 family.

The protein localises to the cell membrane. Its function is as follows. Receptor for neuropeptide Y and peptide YY. The activity of this receptor is mediated by G proteins that inhibit adenylate cyclase activity. Seems to be associated with food intake. Could be involved in feeding disorders. The chain is Neuropeptide Y receptor type 5 (NPY5R) from Sus scrofa (Pig).